Reading from the N-terminus, the 920-residue chain is Phosphoenolpyruvate carboxylase (920 aa).

Catalysis depends on residues histidine 138 and lysine 583.

Belongs to the PEPCase type 1 family. The cofactor is Mg(2+).

The catalysed reaction is oxaloacetate + phosphate = phosphoenolpyruvate + hydrogencarbonate. Functionally, forms oxaloacetate, a four-carbon dicarboxylic acid source for the tricarboxylic acid cycle. In Streptococcus pyogenes serotype M1, this protein is Phosphoenolpyruvate carboxylase.